The following is a 268-amino-acid chain: Putative ABC transporter ATP-binding protein MK0182 (268 aa).

An ABC transporter domain is found at 1–229; sequence MTHEYPDGTC…VDLIRESGLK (229 aa). An ATP-binding site is contributed by 29–36; that stretch reads GPNGSGKT.

This sequence belongs to the ABC transporter superfamily.

It localises to the cell membrane. Functionally, probably part of an ABC transporter complex. Responsible for energy coupling to the transport system. This is Putative ABC transporter ATP-binding protein MK0182 from Methanopyrus kandleri (strain AV19 / DSM 6324 / JCM 9639 / NBRC 100938).